Here is a 309-residue protein sequence, read N- to C-terminus: tRNA dimethylallyltransferase (309 aa).

Residue 13 to 20 coordinates ATP; that stretch reads GPTGAGKT. 15 to 20 contacts substrate; it reads TGAGKT. Interaction with substrate tRNA stretches follow at residues 38–41 and 162–166; these read DSRQ and QRVTR.

It belongs to the IPP transferase family. In terms of assembly, monomer. It depends on Mg(2+) as a cofactor.

It catalyses the reaction adenosine(37) in tRNA + dimethylallyl diphosphate = N(6)-dimethylallyladenosine(37) in tRNA + diphosphate. Catalyzes the transfer of a dimethylallyl group onto the adenine at position 37 in tRNAs that read codons beginning with uridine, leading to the formation of N6-(dimethylallyl)adenosine (i(6)A). In Nitratidesulfovibrio vulgaris (strain ATCC 29579 / DSM 644 / CCUG 34227 / NCIMB 8303 / VKM B-1760 / Hildenborough) (Desulfovibrio vulgaris), this protein is tRNA dimethylallyltransferase.